Here is a 68-residue protein sequence, read N- to C-terminus: MVYYPERFVWVSQEPFPNKNMEGRLPKGRLPVPKEVNRKKNDETNAASLTPLGSSELRSPRISYLHFF.

A disordered region spans residues 21–54 (MEGRLPKGRLPVPKEVNRKKNDETNAASLTPLGS). The segment covering 44–54 (TNAASLTPLGS) has biased composition (polar residues).

In terms of assembly, interacts with the latency-associated peptides (LAP) of TGFB1 and TGFB2; the interaction results in a decrease in TGFB autoinduction. Interacts with FLNA. Post-translationally, phosphorylated on Ser-59. Phosphorylation decreases stability and activity.

It is found in the cytoplasm. May have roles in neural function and cellular differentiation. Ectopic expression promotes axonal regeneration, induces differentiation of fibroblast into myofibroblast, induces myofibroblast ameboid migration, augments motility of gliomas, and increases retinoic-acid regulation of lipid-droplet biogenesis. Down-regulates the expression of TGFB1 and TGFB2 but not of TGFB3. May play a role in the regulation of alveolar generation. In Macaca fascicularis (Crab-eating macaque), this protein is Neuronal regeneration-related protein (NREP).